A 284-amino-acid polypeptide reads, in one-letter code: 2-dehydro-3-deoxyphosphooctonate aldolase (284 aa).

It belongs to the KdsA family.

The protein localises to the cytoplasm. It carries out the reaction D-arabinose 5-phosphate + phosphoenolpyruvate + H2O = 3-deoxy-alpha-D-manno-2-octulosonate-8-phosphate + phosphate. It functions in the pathway carbohydrate biosynthesis; 3-deoxy-D-manno-octulosonate biosynthesis; 3-deoxy-D-manno-octulosonate from D-ribulose 5-phosphate: step 2/3. The protein operates within bacterial outer membrane biogenesis; lipopolysaccharide biosynthesis. The polypeptide is 2-dehydro-3-deoxyphosphooctonate aldolase (Pectobacterium atrosepticum (strain SCRI 1043 / ATCC BAA-672) (Erwinia carotovora subsp. atroseptica)).